Consider the following 327-residue polypeptide: Movement protein (327 aa).

Positions 252–311 (DLTREEREKAAQLEMLRKTREVHTQRSAEEMKRRQAELAKDTQRKLAEEAKAVTEKRKNM) form a coiled coil. Disordered stretches follow at residues 271 to 294 (REVHTQRSAEEMKRRQAELAKDTQ) and 307 to 327 (KRKNMAGVNSSNIKFGNFDSV). The segment covering 313–327 (GVNSSNIKFGNFDSV) has biased composition (polar residues).

The protein resides in the host cell wall. Its subcellular location is the host cytoplasm. Transports viral genome to neighboring plant cells directly through plasmosdesmata, without any budding. The movement protein allows efficient cell to cell propagation, by bypassing the host cell wall barrier. This chain is Movement protein, found in Hordeum vulgare (Barley).